A 205-amino-acid polypeptide reads, in one-letter code: Anaerobic dimethyl sulfoxide reductase chain B (205 aa).

3 consecutive 4Fe-4S ferredoxin-type domains span residues 4–32 (YGFY…LGTE), 57–89 (NIFA…KNAD), and 90–119 (GFVI…YDAQ). [4Fe-4S] cluster is bound by residues Cys13, Cys16, Cys19, Cys23, Cys67, Cys70, Cys75, Cys79, Cys99, Cys102, Cys105, Cys109, Cys126, Cys129, Cys141, and Cys145.

Heterotrimeric enzyme composed of a catalytic heterodimer (DmsAB) and a membrane anchor protein (DmsC). [4Fe-4S] cluster is required as a cofactor.

Its function is as follows. Electron transfer subunit of the terminal reductase during anaerobic growth on various sulfoxide and N-oxide compounds. The sequence is that of Anaerobic dimethyl sulfoxide reductase chain B (dmsB) from Haemophilus influenzae (strain ATCC 51907 / DSM 11121 / KW20 / Rd).